Consider the following 282-residue polypeptide: Putative peroxisomal biogenesis factor 19 (282 aa).

The tract at residues 73–95 (QEEAMKKAGADPSEGEGEQPLDP) is disordered. Cysteine 279 bears the Cysteine methyl ester mark. The S-farnesyl cysteine moiety is linked to residue cysteine 279. The propeptide at 280 to 282 (SIM) is removed in mature form.

It belongs to the peroxin-19 family.

Its subcellular location is the peroxisome. The sequence is that of Putative peroxisomal biogenesis factor 19 (prx-19) from Caenorhabditis elegans.